We begin with the raw amino-acid sequence, 88 residues long: Acylphosphatase (88 aa).

Residues 3–88 (AARFVVSGVV…VPPTEDFVTG (86 aa)) form the Acylphosphatase-like domain. Active-site residues include arginine 18 and asparagine 36.

This sequence belongs to the acylphosphatase family.

The enzyme catalyses an acyl phosphate + H2O = a carboxylate + phosphate + H(+). This chain is Acylphosphatase (acyP), found in Xanthomonas euvesicatoria pv. vesicatoria (strain 85-10) (Xanthomonas campestris pv. vesicatoria).